Here is a 269-residue protein sequence, read N- to C-terminus: Shikimate dehydrogenase (NADP(+)) (269 aa).

Shikimate contacts are provided by residues 17-19 (SKS) and T64. K68 (proton acceptor) is an active-site residue. D80 contacts NADP(+). Shikimate contacts are provided by N89 and D105. Residues 130 to 134 (GAGGA), 154 to 159 (NRTRAK), and M213 contribute to the NADP(+) site. Y215 is a shikimate binding site. G237 lines the NADP(+) pocket.

This sequence belongs to the shikimate dehydrogenase family. As to quaternary structure, homodimer.

The enzyme catalyses shikimate + NADP(+) = 3-dehydroshikimate + NADPH + H(+). It functions in the pathway metabolic intermediate biosynthesis; chorismate biosynthesis; chorismate from D-erythrose 4-phosphate and phosphoenolpyruvate: step 4/7. Its function is as follows. Involved in the biosynthesis of the chorismate, which leads to the biosynthesis of aromatic amino acids. Catalyzes the reversible NADPH linked reduction of 3-dehydroshikimate (DHSA) to yield shikimate (SA). This Neisseria gonorrhoeae (strain ATCC 700825 / FA 1090) protein is Shikimate dehydrogenase (NADP(+)).